Here is a 308-residue protein sequence, read N- to C-terminus: Transaldolase (308 aa).

Lysine 125 (schiff-base intermediate with substrate) is an active-site residue.

It belongs to the transaldolase family. Type 1 subfamily. Homodimer.

It localises to the cytoplasm. It catalyses the reaction D-sedoheptulose 7-phosphate + D-glyceraldehyde 3-phosphate = D-erythrose 4-phosphate + beta-D-fructose 6-phosphate. It functions in the pathway carbohydrate degradation; pentose phosphate pathway; D-glyceraldehyde 3-phosphate and beta-D-fructose 6-phosphate from D-ribose 5-phosphate and D-xylulose 5-phosphate (non-oxidative stage): step 2/3. Transaldolase is important for the balance of metabolites in the pentose-phosphate pathway. This chain is Transaldolase, found in Pseudomonas savastanoi pv. phaseolicola (strain 1448A / Race 6) (Pseudomonas syringae pv. phaseolicola (strain 1448A / Race 6)).